The chain runs to 133 residues: Large ribosomal subunit protein uL22 (133 aa).

The protein belongs to the universal ribosomal protein uL22 family. As to quaternary structure, part of the 50S ribosomal subunit.

This protein binds specifically to 23S rRNA; its binding is stimulated by other ribosomal proteins, e.g. L4, L17, and L20. It is important during the early stages of 50S assembly. It makes multiple contacts with different domains of the 23S rRNA in the assembled 50S subunit and ribosome. In terms of biological role, the globular domain of the protein is located near the polypeptide exit tunnel on the outside of the subunit, while an extended beta-hairpin is found that lines the wall of the exit tunnel in the center of the 70S ribosome. This is Large ribosomal subunit protein uL22 from Granulibacter bethesdensis (strain ATCC BAA-1260 / CGDNIH1).